We begin with the raw amino-acid sequence, 118 residues long: HTH-type transcriptional regulator CmtR (118 aa).

The HTH arsR-type domain maps to threonine 3–aspartate 97. Cysteine 57, cysteine 61, and cysteine 102 together coordinate Cd(2+).

As to quaternary structure, homodimer.

Its function is as follows. Metal-responsive transcriptional repressor for the cmt operon. Binding of cadmium or lead causes the repressor to dissociate from the DNA. This chain is HTH-type transcriptional regulator CmtR (cmtR), found in Mycobacterium bovis (strain ATCC BAA-935 / AF2122/97).